Reading from the N-terminus, the 575-residue chain is Delta-1-pyrroline-5-carboxylate dehydrogenase, mitochondrial (575 aa).

Residue 297–302 (GKIQSG) coordinates NAD(+). E317 acts as the Proton acceptor in catalysis. C351 (nucleophile) is an active-site residue.

This sequence belongs to the aldehyde dehydrogenase family.

The protein localises to the mitochondrion inner membrane. The catalysed reaction is L-glutamate 5-semialdehyde + NAD(+) + H2O = L-glutamate + NADH + 2 H(+). The protein operates within amino-acid degradation; L-proline degradation into L-glutamate; L-glutamate from L-proline: step 2/2. This is Delta-1-pyrroline-5-carboxylate dehydrogenase, mitochondrial (PUT2) from Saccharomyces cerevisiae (strain ATCC 204508 / S288c) (Baker's yeast).